Consider the following 493-residue polypeptide: 3-octaprenyl-4-hydroxybenzoate carboxy-lyase (493 aa).

Mn(2+) is bound at residue asparagine 172. Residues 175–177 (IYR), 189–191 (RWL), and 194–195 (RG) each bind prenylated FMN. Residue glutamate 238 participates in Mn(2+) binding. Residue aspartate 287 is the Proton donor of the active site.

Belongs to the UbiD family. In terms of assembly, homohexamer. Requires prenylated FMN as cofactor. Mn(2+) is required as a cofactor.

The protein resides in the cell membrane. It catalyses the reaction a 4-hydroxy-3-(all-trans-polyprenyl)benzoate + H(+) = a 2-(all-trans-polyprenyl)phenol + CO2. The protein operates within cofactor biosynthesis; ubiquinone biosynthesis. In terms of biological role, catalyzes the decarboxylation of 3-octaprenyl-4-hydroxy benzoate to 2-octaprenylphenol, an intermediate step in ubiquinone biosynthesis. The protein is 3-octaprenyl-4-hydroxybenzoate carboxy-lyase of Shewanella woodyi (strain ATCC 51908 / MS32).